Here is a 240-residue protein sequence, read N- to C-terminus: Ribonuclease PH (240 aa).

Phosphate-binding positions include Arg86 and 124–126 (GTR).

Belongs to the RNase PH family. In terms of assembly, homohexameric ring arranged as a trimer of dimers.

The enzyme catalyses tRNA(n+1) + phosphate = tRNA(n) + a ribonucleoside 5'-diphosphate. Functionally, phosphorolytic 3'-5' exoribonuclease that plays an important role in tRNA 3'-end maturation. Removes nucleotide residues following the 3'-CCA terminus of tRNAs; can also add nucleotides to the ends of RNA molecules by using nucleoside diphosphates as substrates, but this may not be physiologically important. Probably plays a role in initiation of 16S rRNA degradation (leading to ribosome degradation) during starvation. This chain is Ribonuclease PH, found in Mannheimia succiniciproducens (strain KCTC 0769BP / MBEL55E).